The primary structure comprises 372 residues: Queuine tRNA-ribosyltransferase (372 aa).

Catalysis depends on D92, which acts as the Proton acceptor. Residues 92–96 (DSGGF), D146, Q188, and G215 each bind substrate. Positions 246–252 (GIGTLRE) are RNA binding. D265 functions as the Nucleophile in the catalytic mechanism. Residues 270 to 274 (TRLGR) are RNA binding; important for wobble base 34 recognition. Residues C303, C305, C308, and H334 each contribute to the Zn(2+) site.

The protein belongs to the queuine tRNA-ribosyltransferase family. Homodimer. Within each dimer, one monomer is responsible for RNA recognition and catalysis, while the other monomer binds to the replacement base PreQ1. Zn(2+) serves as cofactor.

It carries out the reaction 7-aminomethyl-7-carbaguanine + guanosine(34) in tRNA = 7-aminomethyl-7-carbaguanosine(34) in tRNA + guanine. It participates in tRNA modification; tRNA-queuosine biosynthesis. Functionally, catalyzes the base-exchange of a guanine (G) residue with the queuine precursor 7-aminomethyl-7-deazaguanine (PreQ1) at position 34 (anticodon wobble position) in tRNAs with GU(N) anticodons (tRNA-Asp, -Asn, -His and -Tyr). Catalysis occurs through a double-displacement mechanism. The nucleophile active site attacks the C1' of nucleotide 34 to detach the guanine base from the RNA, forming a covalent enzyme-RNA intermediate. The proton acceptor active site deprotonates the incoming PreQ1, allowing a nucleophilic attack on the C1' of the ribose to form the product. After dissociation, two additional enzymatic reactions on the tRNA convert PreQ1 to queuine (Q), resulting in the hypermodified nucleoside queuosine (7-(((4,5-cis-dihydroxy-2-cyclopenten-1-yl)amino)methyl)-7-deazaguanosine). The protein is Queuine tRNA-ribosyltransferase of Synechococcus sp. (strain CC9311).